The following is a 129-amino-acid chain: Profilin-4 (129 aa).

It belongs to the profilin family. In terms of tissue distribution, expressed in testis, in seminiferous tubules (at protein level). Expressed in spermatocytes and spermatids, but not in spermatogonium.

Its subcellular location is the cytoplasm. In terms of biological role, involved in male fertility. Required for manchette development and acrosome biogenesis during spermiogenesis. Binds in vitro to phospholipids, including phosphatidylinositol 3-phosphate (PtdIns(3)P), phosphatidylinositol 4,5-bisphosphate (PtdIns(4,5)P2), phosphatidylinositol 4-phosphate (PtdIns(4)P) and phosphatidic acid (PA). Contrary to other profilin family members, does not bind to actin in vitro. The sequence is that of Profilin-4 (Pfn4) from Rattus norvegicus (Rat).